A 728-amino-acid chain; its full sequence is Polyribonucleotide nucleotidyltransferase (728 aa).

Asp488 and Asp494 together coordinate Mg(2+). Positions 555 to 614 constitute a KH domain; that stretch reads PRMITMKIHPDKIREVIGKGGSTIQALTKETGTTIDIQEDGTITIASTSTDGMAEAKRRI. One can recognise an S1 motif domain in the interval 624–692; it reads GKIYNGTVLK…EKGRLRLSLK (69 aa). The segment at 702–728 is disordered; it reads ISPVNAGEAAPAPAPAAAPATPSDQQQ. Over residues 710–721 the composition is skewed to low complexity; it reads AAPAPAPAAAPA.

The protein belongs to the polyribonucleotide nucleotidyltransferase family. It depends on Mg(2+) as a cofactor.

Its subcellular location is the cytoplasm. The catalysed reaction is RNA(n+1) + phosphate = RNA(n) + a ribonucleoside 5'-diphosphate. In terms of biological role, involved in mRNA degradation. Catalyzes the phosphorolysis of single-stranded polyribonucleotides processively in the 3'- to 5'-direction. The polypeptide is Polyribonucleotide nucleotidyltransferase (Cupriavidus pinatubonensis (strain JMP 134 / LMG 1197) (Cupriavidus necator (strain JMP 134))).